A 501-amino-acid chain; its full sequence is Probable cytochrome P450 6t3 (501 aa).

Heme is bound at residue Cys-444.

It belongs to the cytochrome P450 family. The cofactor is heme.

The protein localises to the endoplasmic reticulum membrane. The protein resides in the microsome membrane. May be involved in the metabolism of insect hormones and in the breakdown of synthetic insecticides. The protein is Probable cytochrome P450 6t3 (Cyp6t3) of Drosophila melanogaster (Fruit fly).